Consider the following 391-residue polypeptide: Polysialic acid biosynthesis protein P7 (391 aa).

Its function is as follows. May be involved in the synthesis of polysialic acid (PSA). The chain is Polysialic acid biosynthesis protein P7 (neuC) from Escherichia coli.